The following is a 328-amino-acid chain: Tetraacyldisaccharide 4'-kinase (328 aa).

Residue threonine 55–threonine 62 participates in ATP binding.

The protein belongs to the LpxK family.

The catalysed reaction is a lipid A disaccharide + ATP = a lipid IVA + ADP + H(+). It functions in the pathway glycolipid biosynthesis; lipid IV(A) biosynthesis; lipid IV(A) from (3R)-3-hydroxytetradecanoyl-[acyl-carrier-protein] and UDP-N-acetyl-alpha-D-glucosamine: step 6/6. Transfers the gamma-phosphate of ATP to the 4'-position of a tetraacyldisaccharide 1-phosphate intermediate (termed DS-1-P) to form tetraacyldisaccharide 1,4'-bis-phosphate (lipid IVA). This Shigella boydii serotype 18 (strain CDC 3083-94 / BS512) protein is Tetraacyldisaccharide 4'-kinase.